Consider the following 462-residue polypeptide: Bindin (462 aa).

The signal sequence occupies residues 1-19; sequence MARQLSVILVALTLTTALA. The propeptide occupies 20–244; that stretch reads ENFPTRTSAP…DSGRSARKKR (225 aa). Disordered regions lie at residues 155-194 and 221-278; these read DDRR…APKD and RTRR…QGMG. The interval 372–380 is fucose-binding domain; it reads LRHLRHHSN.

The protein belongs to the bindin family.

The protein localises to the cytoplasmic vesicle. It localises to the secretory vesicle. Its subcellular location is the acrosome lumen. Functionally, species-specific sea urchin sperm protein required for adhesion of sperm to the egg surface during fertilization. Bindin coats the acrosomal process after it is externalized by the acrosome reaction. It binds to sulfated, fucose-containing polysaccharides on the vitelline layer receptor proteoglycans which cover the egg plasma membrane. This Lytechinus variegatus (Green sea urchin) protein is Bindin.